A 512-amino-acid chain; its full sequence is Cytochrome P450 1A1 (512 aa).

A mitochondrial targeting signal region spans residues 29–40 (SRPQVPKGLKNP). The O-linked (GlcNAc) serine glycan is linked to S67. Substrate is bound at residue F224. C457 is a heme binding site.

This sequence belongs to the cytochrome P450 family. In terms of assembly, interacts with cytosolic chaperones HSP70 and HSP90; this interaction is required for initial targeting to mitochondria. Interacts (via mitochondrial targeting signal) with TOMM40 (via N-terminus); this interaction is required for translocation across the mitochondrial outer membrane. Requires heme as cofactor. Lung, lymphocytes and placenta.

The protein resides in the endoplasmic reticulum membrane. It localises to the mitochondrion inner membrane. Its subcellular location is the microsome membrane. The protein localises to the cytoplasm. The enzyme catalyses an organic molecule + reduced [NADPH--hemoprotein reductase] + O2 = an alcohol + oxidized [NADPH--hemoprotein reductase] + H2O + H(+). The catalysed reaction is estrone + reduced [NADPH--hemoprotein reductase] + O2 = 2-hydroxyestrone + oxidized [NADPH--hemoprotein reductase] + H2O + H(+). It carries out the reaction estrone + reduced [NADPH--hemoprotein reductase] + O2 = 4-hydroxyestrone + oxidized [NADPH--hemoprotein reductase] + H2O + H(+). It catalyses the reaction estrone + reduced [NADPH--hemoprotein reductase] + O2 = 6alpha-hydroxyestrone + oxidized [NADPH--hemoprotein reductase] + H2O + H(+). The enzyme catalyses estrone + reduced [NADPH--hemoprotein reductase] + O2 = 15alpha-hydroxyestrone + oxidized [NADPH--hemoprotein reductase] + H2O + H(+). The catalysed reaction is estrone + reduced [NADPH--hemoprotein reductase] + O2 = 16alpha-hydroxyestrone + oxidized [NADPH--hemoprotein reductase] + H2O + H(+). It carries out the reaction 17beta-estradiol + reduced [NADPH--hemoprotein reductase] + O2 = 2-hydroxy-17beta-estradiol + oxidized [NADPH--hemoprotein reductase] + H2O + H(+). It catalyses the reaction 17beta-estradiol + reduced [NADPH--hemoprotein reductase] + O2 = 4-hydroxy-17beta-estradiol + oxidized [NADPH--hemoprotein reductase] + H2O + H(+). The enzyme catalyses 17beta-estradiol + reduced [NADPH--hemoprotein reductase] + O2 = 6alpha-hydroxy-17beta-estradiol + oxidized [NADPH--hemoprotein reductase] + H2O + H(+). The catalysed reaction is 17beta-estradiol + reduced [NADPH--hemoprotein reductase] + O2 = 7alpha-hydroxy-17beta-estradiol + oxidized [NADPH--hemoprotein reductase] + H2O + H(+). It carries out the reaction 17beta-estradiol + reduced [NADPH--hemoprotein reductase] + O2 = 15alpha-hydroxy-17beta-estradiol + oxidized [NADPH--hemoprotein reductase] + H2O + H(+). It catalyses the reaction (5Z,8Z,11Z)-eicosatrienoate + reduced [NADPH--hemoprotein reductase] + O2 = 19-hydroxy-(5Z,8Z,11Z)-eicosatrienoate + oxidized [NADPH--hemoprotein reductase] + H2O + H(+). The enzyme catalyses (5Z,8Z,11Z,14Z)-eicosatetraenoate + reduced [NADPH--hemoprotein reductase] + O2 = 16-hydroxy-(5Z,8Z,11Z,14Z)-eicosatetraenoate + oxidized [NADPH--hemoprotein reductase] + H2O + H(+). The catalysed reaction is (5Z,8Z,11Z,14Z)-eicosatetraenoate + reduced [NADPH--hemoprotein reductase] + O2 = 17-hydroxy-(5Z,8Z,11Z,14Z)-eicosatetraenoate + oxidized [NADPH--hemoprotein reductase] + H2O + H(+). It carries out the reaction (5Z,8Z,11Z,14Z)-eicosatetraenoate + reduced [NADPH--hemoprotein reductase] + O2 = 18-hydroxy-(5Z,8Z,11Z,14Z)-eicosatetraenoate + oxidized [NADPH--hemoprotein reductase] + H2O + H(+). It catalyses the reaction (5Z,8Z,11Z,14Z)-eicosatetraenoate + reduced [NADPH--hemoprotein reductase] + O2 = 19-hydroxy-(5Z,8Z,11Z,14Z)-eicosatetraenoate + oxidized [NADPH--hemoprotein reductase] + H2O + H(+). The enzyme catalyses (5Z,8Z,11Z,14Z,17Z)-eicosapentaenoate + reduced [NADPH--hemoprotein reductase] + O2 = 19-hydroxy-(5Z,8Z,11Z,14Z,17Z)-eicosapentaenoate + oxidized [NADPH--hemoprotein reductase] + H2O + H(+). The catalysed reaction is (5Z,8Z,11Z,14Z)-eicosatetraenoate + reduced [NADPH--hemoprotein reductase] + O2 = (8R,9S)-epoxy-(5Z,11Z,14Z)-eicosatrienoate + oxidized [NADPH--hemoprotein reductase] + H2O + H(+). It carries out the reaction (5Z,8Z,11Z,14Z)-eicosatetraenoate + reduced [NADPH--hemoprotein reductase] + O2 = (11R,12S)-epoxy-(5Z,8Z,14Z)-eicosatrienoate + oxidized [NADPH--hemoprotein reductase] + H2O + H(+). It catalyses the reaction (5Z,8Z,11Z,14Z)-eicosatetraenoate + reduced [NADPH--hemoprotein reductase] + O2 = (14S,15R)-epoxy-(5Z,8Z,11Z)-eicosatrienoate + oxidized [NADPH--hemoprotein reductase] + H2O + H(+). The enzyme catalyses (5Z,8Z,11Z,14Z)-eicosatetraenoate + reduced [NADPH--hemoprotein reductase] + O2 = (14R,15S)-epoxy-(5Z,8Z,11Z)-eicosatrienoate + oxidized [NADPH--hemoprotein reductase] + H2O + H(+). The catalysed reaction is (5Z,8Z,11Z,14Z,17Z)-eicosapentaenoate + reduced [NADPH--hemoprotein reductase] + O2 = (17R,18S)-epoxy-(5Z,8Z,11Z,14Z)-eicosatetraenoate + oxidized [NADPH--hemoprotein reductase] + H2O + H(+). It carries out the reaction (4Z,7Z,10Z,13Z,16Z,19Z)-docosahexaenoate + reduced [NADPH--hemoprotein reductase] + O2 = (19S,20R)-epoxy-(4Z,7Z,10Z,13Z,16Z)-docosapentaenoate + oxidized [NADPH--hemoprotein reductase] + H2O + H(+). It catalyses the reaction (4Z,7Z,10Z,13Z,16Z,19Z)-docosahexaenoate + reduced [NADPH--hemoprotein reductase] + O2 = (19R,20S)-epoxy-(4Z,7Z,10Z,13Z,16Z)-docosapentaenoate + oxidized [NADPH--hemoprotein reductase] + H2O + H(+). The enzyme catalyses all-trans-retinol + reduced [NADPH--hemoprotein reductase] + O2 = all-trans-retinal + oxidized [NADPH--hemoprotein reductase] + 2 H2O + H(+). The catalysed reaction is all-trans-retinal + reduced [NADPH--hemoprotein reductase] + O2 = all-trans-retinoate + oxidized [NADPH--hemoprotein reductase] + H2O + 2 H(+). It carries out the reaction (13S)-hydroperoxy-(9Z,11E)-octadecadienoate = 13-oxo-(9Z,11E)-octadecadienoate + H2O. It catalyses the reaction (12S)-hydroperoxy-(5Z,8Z,10E,14Z)-eicosatetraenoate = 12-oxo-(5Z,8Z,10E,14Z)-eicosatetraenoate + H2O. The enzyme catalyses (15S)-hydroperoxy-(5Z,8Z,11Z,13E)-eicosatetraenoate = 15-oxo-(5Z,8Z,11Z,13E)-eicosatetraenoate + H2O. The catalysed reaction is (5S)-hydroperoxy-(6E,8Z,11Z,14Z)-eicosatetraenoate = 5-oxo-(6E,8Z,11Z,14Z)-eicosatetraenoate + H2O. It participates in steroid hormone biosynthesis. It functions in the pathway lipid metabolism; fatty acid metabolism. Its pathway is cofactor metabolism; retinol metabolism. A cytochrome P450 monooxygenase involved in the metabolism of various endogenous substrates, including fatty acids, steroid hormones and vitamins. Mechanistically, uses molecular oxygen inserting one oxygen atom into a substrate, and reducing the second into a water molecule, with two electrons provided by NADPH via cytochrome P450 reductase (NADPH--hemoprotein reductase). Catalyzes the hydroxylation of carbon-hydrogen bonds. Exhibits high catalytic activity for the formation of hydroxyestrogens from estrone (E1) and 17beta-estradiol (E2), namely 2-hydroxy E1 and E2, as well as D-ring hydroxylated E1 and E2 at the C15-alpha and C16-alpha positions. Displays different regioselectivities for polyunsaturated fatty acids (PUFA) hydroxylation. Catalyzes the epoxidation of double bonds of certain PUFA. Converts arachidonic acid toward epoxyeicosatrienoic acid (EET) regioisomers, 8,9-, 11,12-, and 14,15-EET, that function as lipid mediators in the vascular system. Displays an absolute stereoselectivity in the epoxidation of eicosapentaenoic acid (EPA) producing the 17(R),18(S) enantiomer. May play an important role in all-trans retinoic acid biosynthesis in extrahepatic tissues. Catalyzes two successive oxidative transformation of all-trans retinol to all-trans retinal and then to the active form all-trans retinoic acid. May also participate in eicosanoids metabolism by converting hydroperoxide species into oxo metabolites (lipoxygenase-like reaction, NADPH-independent). This Homo sapiens (Human) protein is Cytochrome P450 1A1.